We begin with the raw amino-acid sequence, 64 residues long: Large ribosomal subunit protein uL30 (64 aa).

The segment at 1-22 (MSEQVKRVRVTQVGSPIGRKPG) is disordered.

The protein belongs to the universal ribosomal protein uL30 family. In terms of assembly, part of the 50S ribosomal subunit.

In Acidiphilium cryptum (strain JF-5), this protein is Large ribosomal subunit protein uL30.